Reading from the N-terminus, the 279-residue chain is Energy-coupling factor transporter ATP-binding protein EcfA1 (279 aa).

Residues 6–240 (VRLEHVFYKY…ADAMREIGLG (235 aa)) form the ABC transporter domain. 40-47 (GHNGSGKS) serves as a coordination point for ATP.

Belongs to the ABC transporter superfamily. Energy-coupling factor EcfA family. Forms a stable energy-coupling factor (ECF) transporter complex composed of 2 membrane-embedded substrate-binding proteins (S component), 2 ATP-binding proteins (A component) and 2 transmembrane proteins (T component).

It is found in the cell membrane. Its function is as follows. ATP-binding (A) component of a common energy-coupling factor (ECF) ABC-transporter complex. Unlike classic ABC transporters this ECF transporter provides the energy necessary to transport a number of different substrates. The protein is Energy-coupling factor transporter ATP-binding protein EcfA1 of Listeria monocytogenes serotype 4b (strain F2365).